The following is a 105-amino-acid chain: BLOC-1-related complex subunit 7 (105 aa).

This sequence belongs to the BORCS7 family. As to quaternary structure, component of the BLOC-one-related complex (BORC) which is composed of BLOC1S1, BLOC1S2, BORCS5, BORCS6, BORCS7, BORCS8, KXD1 and SNAPIN.

The protein localises to the lysosome membrane. As part of the BORC complex may play a role in lysosomes movement and localization at the cell periphery. Associated with the cytosolic face of lysosomes, the BORC complex may recruit ARL8B and couple lysosomes to microtubule plus-end-directed kinesin motor. The polypeptide is BLOC-1-related complex subunit 7 (Bos taurus (Bovine)).